The following is a 191-amino-acid chain: Protein Ves (191 aa).

Belongs to the Ves family.

The polypeptide is Protein Ves (Escherichia coli (strain SE11)).